A 75-amino-acid chain; its full sequence is UPF0352 protein VV1166 (75 aa).

This sequence belongs to the UPF0352 family.

The chain is UPF0352 protein VV1166 from Vibrio vulnificus (strain YJ016).